The primary structure comprises 237 residues: Pyridoxine 5'-phosphate synthase (237 aa).

2 residues coordinate 3-amino-2-oxopropyl phosphate: N7 and R18. The Proton acceptor role is filled by H43. The 1-deoxy-D-xylulose 5-phosphate site is built by R45 and H50. The Proton acceptor role is filled by E70. 1-deoxy-D-xylulose 5-phosphate is bound at residue T100. The active-site Proton donor is H190. 3-amino-2-oxopropyl phosphate is bound by residues D191 and 213–214 (GH).

It belongs to the PNP synthase family. In terms of assembly, homooctamer; tetramer of dimers.

The protein resides in the cytoplasm. It catalyses the reaction 3-amino-2-oxopropyl phosphate + 1-deoxy-D-xylulose 5-phosphate = pyridoxine 5'-phosphate + phosphate + 2 H2O + H(+). The protein operates within cofactor biosynthesis; pyridoxine 5'-phosphate biosynthesis; pyridoxine 5'-phosphate from D-erythrose 4-phosphate: step 5/5. Functionally, catalyzes the complicated ring closure reaction between the two acyclic compounds 1-deoxy-D-xylulose-5-phosphate (DXP) and 3-amino-2-oxopropyl phosphate (1-amino-acetone-3-phosphate or AAP) to form pyridoxine 5'-phosphate (PNP) and inorganic phosphate. This is Pyridoxine 5'-phosphate synthase from Flavobacterium johnsoniae (strain ATCC 17061 / DSM 2064 / JCM 8514 / BCRC 14874 / CCUG 350202 / NBRC 14942 / NCIMB 11054 / UW101) (Cytophaga johnsonae).